The sequence spans 213 residues: Putative manganese efflux pump MntP (213 aa).

A run of 6 helical transmembrane segments spans residues 3-23, 36-56, 67-87, 130-150, 152-172, and 187-207; these read ILSI…VSVA, ALKV…IGWG, AFDH…MIFE, LAIA…FLGI, IVQT…LGVI, and IVGG…HTGI.

This sequence belongs to the MntP (TC 9.B.29) family.

It is found in the cell membrane. Its function is as follows. Probably functions as a manganese efflux pump. This chain is Putative manganese efflux pump MntP, found in Clostridium perfringens (strain ATCC 13124 / DSM 756 / JCM 1290 / NCIMB 6125 / NCTC 8237 / Type A).